The following is a 103-amino-acid chain: Early nodulin-12 (103 aa).

Positions 1-24 are cleaved as a signal peptide; sequence MASFSLSILVFFFSALVLVPQGFA. 2 repeat units span residues 34–38 and 39–43. The segment at 34-88 is 11 X 5 AA approximate tandem repeats of P-P-[QVHR]-[TNKH]-[KED]; the sequence is PPQTKPPVNKPSHKEPPVNKPPHKEPPVHKPPHKDPPVNKPPQKESPVHKPPRKE. The tract at residues 34–103 is disordered; it reads PPQTKPPVNK…HPPAEDNIHF (70 aa). A 3; approximate repeat occupies 44–48; that stretch reads PSHKE. Positions 45 to 103 are enriched in basic and acidic residues; sequence SHKEPPVNKPPHKEPPVHKPPHKDPPVNKPPQKESPVHKPPRKESPTHRHPPAEDNIHF. Tandem repeats lie at residues 49 to 53, 54 to 58, 59 to 63, 64 to 68, 69 to 73, and 74 to 78. The 10; approximate repeat unit spans residues 79-83; sequence SPVHK. Residues 84 to 88 form repeat 11; sequence PPRKE.

The protein belongs to the plant proline-rich protein superfamily. ENOD12 family. As to expression, root nodules.

It is found in the secreted. It localises to the cell wall. Involved in the infection process during the plant-rhizobium interaction. In Medicago truncatula (Barrel medic), this protein is Early nodulin-12 (ENOD12).